The chain runs to 371 residues: UDP-N-acetylglucosamine--N-acetylmuramyl-(pentapeptide) pyrophosphoryl-undecaprenol N-acetylglucosamine transferase (371 aa).

Residues 10 to 12 (TGG), N124, R166, S196, and Q301 each bind UDP-N-acetyl-alpha-D-glucosamine.

It belongs to the glycosyltransferase 28 family. MurG subfamily.

Its subcellular location is the cell membrane. It carries out the reaction di-trans,octa-cis-undecaprenyl diphospho-N-acetyl-alpha-D-muramoyl-L-alanyl-D-glutamyl-meso-2,6-diaminopimeloyl-D-alanyl-D-alanine + UDP-N-acetyl-alpha-D-glucosamine = di-trans,octa-cis-undecaprenyl diphospho-[N-acetyl-alpha-D-glucosaminyl-(1-&gt;4)]-N-acetyl-alpha-D-muramoyl-L-alanyl-D-glutamyl-meso-2,6-diaminopimeloyl-D-alanyl-D-alanine + UDP + H(+). The protein operates within cell wall biogenesis; peptidoglycan biosynthesis. Functionally, cell wall formation. Catalyzes the transfer of a GlcNAc subunit on undecaprenyl-pyrophosphoryl-MurNAc-pentapeptide (lipid intermediate I) to form undecaprenyl-pyrophosphoryl-MurNAc-(pentapeptide)GlcNAc (lipid intermediate II). The chain is UDP-N-acetylglucosamine--N-acetylmuramyl-(pentapeptide) pyrophosphoryl-undecaprenol N-acetylglucosamine transferase from Moorella thermoacetica (strain ATCC 39073 / JCM 9320).